The following is a 366-amino-acid chain: Prostaglandin F2-alpha receptor (366 aa).

Topologically, residues 1–31 (MSMNSSKQPVSPAAGLIANTTCQTENRLSVF) are extracellular. Residues Asn4 and Asn19 are each glycosylated (N-linked (GlcNAc...) asparagine). A helical membrane pass occupies residues 32–55 (FSIIFMTVGILSNSLAIAILMKAY). At 56–69 (QRFRQKSKASFLLL) the chain is on the cytoplasmic side. The chain crosses the membrane as a helical span at residues 70–90 (ASGLVITDFFGHLINGGIAVF). At 91 to 109 (VYASDKDWIRFDQSNILCS) the chain is on the extracellular side. Cysteines 108 and 186 form a disulfide. Residues 110–131 (IFGISMVFSGLCPLFLGSAMAI) traverse the membrane as a helical segment. The Cytoplasmic segment spans residues 132 to 152 (ERCIGVTNPIFHSTKITSKHV). Residues 153–175 (KMILSGVCMFAVFVAVLPILGHR) traverse the membrane as a helical segment. Over 176–198 (DYQIQASRTWCFYNTEHIEDWED) the chain is Extracellular. The chain crosses the membrane as a helical span at residues 199-224 (RFYLLFFSFLGLLALGVSFSCNAVTG). Residues 225-250 (VTLLRVKFRSQQHRQGRSHHLEMIIQ) lie on the Cytoplasmic side of the membrane. Residues 251-267 (LLAIMCVSCVCWSPFLV) traverse the membrane as a helical segment. Topologically, residues 268–285 (TMANIAINGNNSPVTCET) are extracellular. A helical membrane pass occupies residues 286–307 (TLFALRMATWNQILDPWVYILL). The Cytoplasmic portion of the chain corresponds to 308–366 (RKAVLRNLYKLASRCCGVNIISLHIWELSSIKNSLKVAAISESPAAEKESQQASSEAGL).

The protein belongs to the G-protein coupled receptor 1 family.

It localises to the cell membrane. Its function is as follows. Receptor for prostaglandin F2-alpha (PGF2-alpha). The activity of this receptor is mediated by G proteins which activate a phosphatidylinositol-calcium second messenger system. Initiates luteolysis in the corpus luteum. In Mus musculus (Mouse), this protein is Prostaglandin F2-alpha receptor (Ptgfr).